The chain runs to 180 residues: ATP synthase subunit delta (180 aa).

The protein belongs to the ATPase delta chain family. F-type ATPases have 2 components, F(1) - the catalytic core - and F(0) - the membrane proton channel. F(1) has five subunits: alpha(3), beta(3), gamma(1), delta(1), epsilon(1). F(0) has three main subunits: a(1), b(2) and c(10-14). The alpha and beta chains form an alternating ring which encloses part of the gamma chain. F(1) is attached to F(0) by a central stalk formed by the gamma and epsilon chains, while a peripheral stalk is formed by the delta and b chains.

It localises to the cell membrane. Functionally, f(1)F(0) ATP synthase produces ATP from ADP in the presence of a proton or sodium gradient. F-type ATPases consist of two structural domains, F(1) containing the extramembraneous catalytic core and F(0) containing the membrane proton channel, linked together by a central stalk and a peripheral stalk. During catalysis, ATP synthesis in the catalytic domain of F(1) is coupled via a rotary mechanism of the central stalk subunits to proton translocation. In terms of biological role, this protein is part of the stalk that links CF(0) to CF(1). It either transmits conformational changes from CF(0) to CF(1) or is implicated in proton conduction. The polypeptide is ATP synthase subunit delta (Enterococcus faecalis (strain ATCC 700802 / V583)).